A 640-amino-acid chain; its full sequence is MGDNYNSESIQILEGLEAIRKRPGMYIGATNARGLHHLVWEIVDNSIDEVLANFANKIKIILNKDESITVIDNGRGIPIEIHPKTKVSTLETVFTILHAGGKFDSNTYKISGGLHGVGASVVNALSKYLKVEVRKNNKKYVMEFHNGGQILTPIKEVGSTSETGTTVTFLPDEKIFKETTIFSFSTIQNRIKQLVFLNKGLEISLVDLREEDEEKTVLYQFNNGIKDYVLELNKTIGTPLNDVFYVEGIEDNIVVEFGLQYNDNYSENIFSFCNNINTHEGGTHEEGARLAIVREINNYFKNQINKNNKGNEDKFTWDDIKEGMTIIISIRHPEPQYEGQTNQKLLNSEVKKIVSNIVGKGLSSYLLENPEDAKKIIEKISLSLKATIVAQRAKEITRRKIVMDSFSLPGKLSDCETKDAKIAELYIVEGDSAGGSAKSGRNRKFQAILPLRGKILNVEKAKQIKIFENNEINSIITALGAGIKDNFNDKKLRYQKVIIMTDADVDGAHIRILLLTFFYRYMKDLIENGNIYIAQPPLYKVENSNQIRYVYSDNELELYKEELLKQNKNYTIQRYKGLGEMNPEQLWETTMDPERRLLLKVSVNNAFEANLICNELMGENVEPRKKFIRENAKYVKNLDV.

Residues 423-537 (AELYIVEGDS…NGNIYIAQPP (115 aa)) enclose the Toprim domain. Mg(2+) is bound by residues glutamate 429, aspartate 502, and aspartate 504.

Belongs to the type II topoisomerase GyrB family. As to quaternary structure, heterotetramer, composed of two GyrA and two GyrB chains. In the heterotetramer, GyrA contains the active site tyrosine that forms a transient covalent intermediate with DNA, while GyrB binds cofactors and catalyzes ATP hydrolysis. Requires Mg(2+) as cofactor. Mn(2+) is required as a cofactor. The cofactor is Ca(2+).

It localises to the cytoplasm. The catalysed reaction is ATP-dependent breakage, passage and rejoining of double-stranded DNA.. Functionally, a type II topoisomerase that negatively supercoils closed circular double-stranded (ds) DNA in an ATP-dependent manner to modulate DNA topology and maintain chromosomes in an underwound state. Negative supercoiling favors strand separation, and DNA replication, transcription, recombination and repair, all of which involve strand separation. Also able to catalyze the interconversion of other topological isomers of dsDNA rings, including catenanes and knotted rings. Type II topoisomerases break and join 2 DNA strands simultaneously in an ATP-dependent manner. The chain is DNA gyrase subunit B from Spiroplasma citri.